Here is a 388-residue protein sequence, read N- to C-terminus: Processive diacylglycerol beta-glucosyltransferase (388 aa).

This sequence belongs to the glycosyltransferase 28 family. UgtP subfamily.

It is found in the cell membrane. The enzyme catalyses a 1,2-diacyl-3-O-(beta-D-glucopyranosyl)-sn-glycerol + UDP-alpha-D-glucose = a 1,2-diacyl-3-O-(beta-D-Glc-(1-&gt;6)-beta-D-Glc)-sn-glycerol + UDP + H(+). It catalyses the reaction a 1,2-diacyl-3-O-(beta-D-Glc-(1-&gt;6)-beta-D-Glc)-sn-glycerol + UDP-alpha-D-glucose = a 1,2-diacyl-3-O-(beta-D-Glc-(1-&gt;6)-beta-D-Glc-(1-&gt;6)-beta-D-Glc)-sn-glycerol + UDP + H(+). It carries out the reaction a 1,2-diacyl-sn-glycerol + UDP-alpha-D-glucose = a 1,2-diacyl-3-O-(beta-D-glucopyranosyl)-sn-glycerol + UDP + H(+). It functions in the pathway glycolipid metabolism; diglucosyl-diacylglycerol biosynthesis. Its function is as follows. Processive glucosyltransferase involved in the biosynthesis of both the bilayer- and non-bilayer-forming membrane glucolipids. Is able to successively transfer up to three glucosyl residues to diacylglycerol (DAG), thereby catalyzing the formation of beta-monoglucosyl-DAG (3-O-(beta-D-glucopyranosyl)-1,2-diacyl-sn-glycerol), beta-diglucosyl-DAG (3-O-(beta-D-glucopyranosyl-beta-(1-&gt;6)-D-glucopyranosyl)-1,2-diacyl-sn-glycerol) and beta-triglucosyl-DAG (3-O-(beta-D-glucopyranosyl-beta-(1-&gt;6)-D-glucopyranosyl-beta-(1-&gt;6)-D-glucopyranosyl)-1,2-diacyl-sn-glycerol). Beta-diglucosyl-DAG is the predominant glycolipid found in Bacillales and is also used as a membrane anchor for lipoteichoic acid (LTA). The sequence is that of Processive diacylglycerol beta-glucosyltransferase from Bacillus thuringiensis (strain Al Hakam).